A 546-amino-acid polypeptide reads, in one-letter code: Chaperonin GroEL 1 (546 aa).

ATP contacts are provided by residues 30–33 (TLGP), lysine 51, 87–91 (DGTTT), glycine 415, 479–481 (NAA), and aspartate 495. The disordered stretch occupies residues 526-546 (KEDAPMPGGMPGGMGGMGMDM). Over residues 534 to 546 (GMPGGMGGMGMDM) the composition is skewed to gly residues.

Belongs to the chaperonin (HSP60) family. In terms of assembly, forms a cylinder of 14 subunits composed of two heptameric rings stacked back-to-back. Interacts with the co-chaperonin GroES.

It localises to the cytoplasm. The catalysed reaction is ATP + H2O + a folded polypeptide = ADP + phosphate + an unfolded polypeptide.. Functionally, together with its co-chaperonin GroES, plays an essential role in assisting protein folding. The GroEL-GroES system forms a nano-cage that allows encapsulation of the non-native substrate proteins and provides a physical environment optimized to promote and accelerate protein folding. This is Chaperonin GroEL 1 from Burkholderia pseudomallei (strain K96243).